A 509-amino-acid polypeptide reads, in one-letter code: Dihydrolipoyl dehydrogenase, mitochondrial (509 aa).

The N-terminal 35 residues, 1 to 35 (MQSWSRVYCTLAKRGHFNRIAHGLQGVSAVPLRTY), are a transit peptide targeting the mitochondrion. At K66 the chain carries N6-acetyllysine; alternate. K66 carries the post-translational modification N6-succinyllysine; alternate. FAD-binding positions include 71–80 (EKNETLGGTC) and K89. A disulfide bond links C80 and C85. N6-acetyllysine; alternate occurs at positions 104, 122, 132, and 143. An N6-succinyllysine; alternate mark is found at K104, K122, K132, and K143. An FAD-binding site is contributed by G154. N6-succinyllysine occurs at positions 159 and 166. Residue 183-185 (TGS) participates in FAD binding. NAD(+) contacts are provided by residues 220-227 (GAGVIGVE) and E243. 2 positions are modified to N6-succinyllysine: K273 and K277. V278 provides a ligand contact to NAD(+). 2 positions are modified to phosphoserine: S285 and S297. Residue G314 coordinates NAD(+). An N6-acetyllysine modification is found at K346. FAD contacts are provided by residues D355 and 361 to 364 (MLAH). K410 is modified (N6-acetyllysine; alternate). K410 carries the N6-succinyllysine; alternate modification. An N6-acetyllysine mark is found at K417 and K420. K430 is subject to N6-succinyllysine. H487 functions as the Proton acceptor in the catalytic mechanism. A Phosphoserine modification is found at S502. The residue at position 505 (K505) is an N6-acetyllysine; alternate. An N6-succinyllysine; alternate modification is found at K505.

The protein belongs to the class-I pyridine nucleotide-disulfide oxidoreductase family. In terms of assembly, homodimer. Part of the multimeric pyruvate dehydrogenase complex that contains multiple copies of pyruvate dehydrogenase (subunits PDHA (PDHA1 or PDHA2) and PDHB, E1), dihydrolipoamide acetyltransferase (DLAT, E2) and lipoamide dehydrogenase (DLD, E3). These subunits are bound to an inner core composed of about 48 DLAT and 12 PDHX molecules (by non covalent bonds). The 2-oxoglutarate dehydrogenase complex is composed of OGDH (2-oxoglutarate dehydrogenase; E1), DLST (dihydrolipoamide succinyltransferase; E2), DLD (dihydrolipoamide dehydrogenase; E3) and the assembly factor KGD4. It contains multiple copies of the three enzymatic components (E1, E2 and E3). In the nucleus, the 2-oxoglutarate dehydrogenase complex associates with KAT2A. Interacts with PDHX. Requires FAD as cofactor. Tyrosine phosphorylated. Expressed in heart (at protein level).

It is found in the mitochondrion matrix. The protein localises to the nucleus. The protein resides in the cell projection. Its subcellular location is the cilium. It localises to the flagellum. It is found in the cytoplasmic vesicle. The protein localises to the secretory vesicle. The protein resides in the acrosome. It carries out the reaction N(6)-[(R)-dihydrolipoyl]-L-lysyl-[protein] + NAD(+) = N(6)-[(R)-lipoyl]-L-lysyl-[protein] + NADH + H(+). Lipoamide dehydrogenase is a component of the glycine cleavage system as well as an E3 component of three alpha-ketoacid dehydrogenase complexes (pyruvate-, alpha-ketoglutarate-, and branched-chain amino acid-dehydrogenase complex). The 2-oxoglutarate dehydrogenase complex is mainly active in the mitochondrion. A fraction of the 2-oxoglutarate dehydrogenase complex also localizes in the nucleus and is required for lysine succinylation of histones: associates with KAT2A on chromatin and provides succinyl-CoA to histone succinyltransferase KAT2A. In monomeric form may have additional moonlighting function as serine protease. Involved in the hyperactivation of spermatazoa during capacitation and in the spermatazoal acrosome reaction. The sequence is that of Dihydrolipoyl dehydrogenase, mitochondrial (DLD) from Sus scrofa (Pig).